Consider the following 354-residue polypeptide: tRNA-specific 2-thiouridylase MnmA (354 aa).

Residues 7-14 (AMSGGVDS) and Met-33 each bind ATP. Residue Cys-94 is the Nucleophile of the active site. Residues Cys-94 and Cys-192 are joined by a disulfide bond. Gly-118 serves as a coordination point for ATP. The segment at 141–143 (KDQ) is interaction with tRNA. The active-site Cysteine persulfide intermediate is the Cys-192. Residues 296–297 (RY) form an interaction with tRNA region.

This sequence belongs to the MnmA/TRMU family.

It is found in the cytoplasm. The enzyme catalyses S-sulfanyl-L-cysteinyl-[protein] + uridine(34) in tRNA + AH2 + ATP = 2-thiouridine(34) in tRNA + L-cysteinyl-[protein] + A + AMP + diphosphate + H(+). Functionally, catalyzes the 2-thiolation of uridine at the wobble position (U34) of tRNA, leading to the formation of s(2)U34. This is tRNA-specific 2-thiouridylase MnmA from Trichlorobacter lovleyi (strain ATCC BAA-1151 / DSM 17278 / SZ) (Geobacter lovleyi).